We begin with the raw amino-acid sequence, 199 residues long: Small ribosomal subunit protein eS1 (199 aa).

This sequence belongs to the eukaryotic ribosomal protein eS1 family.

In Pyrococcus abyssi (strain GE5 / Orsay), this protein is Small ribosomal subunit protein eS1.